We begin with the raw amino-acid sequence, 427 residues long: 3-phosphoshikimate 1-carboxyvinyltransferase (427 aa).

3-phosphoshikimate is bound by residues Lys22, Ser23, and Arg27. Lys22 provides a ligand contact to phosphoenolpyruvate. Phosphoenolpyruvate contacts are provided by Gly96 and Arg124. 3-phosphoshikimate is bound by residues Ser169, Ser170, Gln171, Ser197, Asp313, Asn336, and Lys340. Phosphoenolpyruvate is bound at residue Gln171. Asp313 functions as the Proton acceptor in the catalytic mechanism. 3 residues coordinate phosphoenolpyruvate: Arg344, Arg386, and Lys411.

This sequence belongs to the EPSP synthase family. As to quaternary structure, monomer.

It localises to the cytoplasm. It carries out the reaction 3-phosphoshikimate + phosphoenolpyruvate = 5-O-(1-carboxyvinyl)-3-phosphoshikimate + phosphate. It functions in the pathway metabolic intermediate biosynthesis; chorismate biosynthesis; chorismate from D-erythrose 4-phosphate and phosphoenolpyruvate: step 6/7. Catalyzes the transfer of the enolpyruvyl moiety of phosphoenolpyruvate (PEP) to the 5-hydroxyl of shikimate-3-phosphate (S3P) to produce enolpyruvyl shikimate-3-phosphate and inorganic phosphate. The sequence is that of 3-phosphoshikimate 1-carboxyvinyltransferase from Enterobacter sp. (strain 638).